Here is a 194-residue protein sequence, read N- to C-terminus: Peptidyl-tRNA hydrolase (194 aa).

TRNA is bound at residue Tyr17. His22 acts as the Proton acceptor in catalysis. The tRNA site is built by Tyr68, Asn70, and Asn116.

The protein belongs to the PTH family. Monomer.

It localises to the cytoplasm. It carries out the reaction an N-acyl-L-alpha-aminoacyl-tRNA + H2O = an N-acyl-L-amino acid + a tRNA + H(+). In terms of biological role, hydrolyzes ribosome-free peptidyl-tRNAs (with 1 or more amino acids incorporated), which drop off the ribosome during protein synthesis, or as a result of ribosome stalling. Catalyzes the release of premature peptidyl moieties from peptidyl-tRNA molecules trapped in stalled 50S ribosomal subunits, and thus maintains levels of free tRNAs and 50S ribosomes. This chain is Peptidyl-tRNA hydrolase, found in Pseudomonas putida (strain ATCC 700007 / DSM 6899 / JCM 31910 / BCRC 17059 / LMG 24140 / F1).